A 160-amino-acid chain; its full sequence is Protein-export protein SecB (160 aa).

This sequence belongs to the SecB family. As to quaternary structure, homotetramer, a dimer of dimers. One homotetramer interacts with 1 SecA dimer.

The protein localises to the cytoplasm. One of the proteins required for the normal export of preproteins out of the cell cytoplasm. It is a molecular chaperone that binds to a subset of precursor proteins, maintaining them in a translocation-competent state. It also specifically binds to its receptor SecA. This Nitrosomonas eutropha (strain DSM 101675 / C91 / Nm57) protein is Protein-export protein SecB.